A 70-amino-acid polypeptide reads, in one-letter code: Delta-hexatoxin-Mg1b (70 aa).

Positions 1–26 (MKILEKALLENDSAAEEESRNLRTKR) are cleaved as a signal peptide. Cystine bridges form between C27/C41, C34/C46, C40/C57, and C42/C68.

In terms of tissue distribution, expressed by the venom gland.

Its subcellular location is the secreted. Its function is as follows. Inhibits tetrodotoxin-sensitive sodium channels (Nav). Intracranial injection into mice causes strong convulsions and death. Intrathorax injection into crickets causes paralysis prolonged for 2 minutes, followed by recovery. The sequence is that of Delta-hexatoxin-Mg1b from Macrothele gigas (Japanese funnel web spider).